An 85-amino-acid chain; its full sequence is RNA-binding protein Hfq (85 aa).

The Sm domain maps to 10-70 (DAFLNQVRKE…ISTIIPQRPV (61 aa)).

Belongs to the Hfq family. As to quaternary structure, homohexamer.

RNA chaperone that binds small regulatory RNA (sRNAs) and mRNAs to facilitate mRNA translational regulation in response to envelope stress, environmental stress and changes in metabolite concentrations. Also binds with high specificity to tRNAs. The sequence is that of RNA-binding protein Hfq from Carboxydothermus hydrogenoformans (strain ATCC BAA-161 / DSM 6008 / Z-2901).